A 109-amino-acid polypeptide reads, in one-letter code: Large ribosomal subunit protein uL22 (109 aa).

This sequence belongs to the universal ribosomal protein uL22 family. In terms of assembly, part of the 50S ribosomal subunit.

Its function is as follows. This protein binds specifically to 23S rRNA; its binding is stimulated by other ribosomal proteins, e.g. L4, L17, and L20. It is important during the early stages of 50S assembly. It makes multiple contacts with different domains of the 23S rRNA in the assembled 50S subunit and ribosome. Functionally, the globular domain of the protein is located near the polypeptide exit tunnel on the outside of the subunit, while an extended beta-hairpin is found that lines the wall of the exit tunnel in the center of the 70S ribosome. The sequence is that of Large ribosomal subunit protein uL22 from Chromobacterium violaceum (strain ATCC 12472 / DSM 30191 / JCM 1249 / CCUG 213 / NBRC 12614 / NCIMB 9131 / NCTC 9757 / MK).